Here is a 293-residue protein sequence, read N- to C-terminus: Acidic endochitinase SE2 (293 aa).

A signal peptide spans 1–25; sequence MAAKIVSVLFLISLLIFASFESSHG. A GH18 domain is found at 26–293; sequence SQIVIYWGQN…GYSSAIKSSV (268 aa). Intrachain disulfides connect Cys45–Cys91 and Cys75–Cys81. Glu151 functions as the Proton donor in the catalytic mechanism. Cys183 and Cys212 are disulfide-bonded.

It belongs to the glycosyl hydrolase 18 family. Chitinase class II subfamily. As to expression, accumulates in leaves during infection.

It is found in the secreted. It localises to the extracellular space. It catalyses the reaction Random endo-hydrolysis of N-acetyl-beta-D-glucosaminide (1-&gt;4)-beta-linkages in chitin and chitodextrins.. Functionally, this protein functions as a defense against chitin containing fungal pathogens. This endochitinase also exhibits exochitinase activity, i.e. it is capable of hydrolyzing chito-oligosaccharides, including chitobiose. This is Acidic endochitinase SE2 (SE2) from Beta vulgaris (Sugar beet).